The primary structure comprises 363 residues: Putative glutamate--cysteine ligase 2 (363 aa).

Belongs to the glutamate--cysteine ligase type 2 family. YbdK subfamily.

The catalysed reaction is L-cysteine + L-glutamate + ATP = gamma-L-glutamyl-L-cysteine + ADP + phosphate + H(+). In terms of biological role, ATP-dependent carboxylate-amine ligase which exhibits weak glutamate--cysteine ligase activity. The polypeptide is Putative glutamate--cysteine ligase 2 (Streptomyces coelicolor (strain ATCC BAA-471 / A3(2) / M145)).